Consider the following 234-residue polypeptide: UstYa family oxidase phomYd' (234 aa).

Residues 1–26 (MEKFFSPSRHNYADLSPTDVPASEES) form a disordered region. Residues 47–69 (VLVNRLLAASTVALVMVSLWLGW) traverse the membrane as a helical segment. The HXXHC 1 motif lies at 151-155 (HWDHC). Residue Asn-208 is glycosylated (N-linked (GlcNAc...) asparagine).

The protein belongs to the ustYa family.

The protein resides in the membrane. It functions in the pathway mycotoxin biosynthesis. Functionally, ustYa family oxidase; part of the gene cluster that mediates the biosynthesis of the phomopsins, a group of hexapeptide mycotoxins which infects lupins and causes lupinosis disease in livestock. Within the pathway, phomYd' catalyzes the desaturation of the Asp moiety into 2,3-dehydroaspartic acid (dAsp). The pathway starts with the processing of the precursor phomA' by several endopeptidases including kexin proteases as well as the cluster-specific S41 family peptidase phomP1 and the oligopeptidase phomG' to produce 10 identical copies of the hexapeptide Tyr-Val-Ile-Pro-Ile-Asp. After being excised from the precursor peptide, the core peptides are cyclized and modified post-translationally by enzymes encoded within the gene cluster. The timing and order of proteolysis of the phomA' precursor and PTMs are still unknown. Two tyrosinase-like enzymes, phomQ1' and phomQ2, catalyze the chlorination and hydroxylation of Tyr, respectively. PhomYb, is proposed to be involved in the construction of the macrocyclic structure. The other 4 ustYa family proteins may be involved in PTMs that generate the unique structure of phomopsin A. PhomYa' is required for the hydroxylation of C-beta of Tyr. PhomYc', phomYd', and phomYe are responsible for the biosynthesis of 2,3-dehydroisoleucine (dIle), 2,3-dehydroaspartic acid (dAsp), and 3,4-dehydroproline (dPro), respectively. While dIle formation by phomYc' is indispensable for the installation of dAsp by phomYd', the order of the other PTMs have not been elucidated yet. Most of the biosynthetic enzymes likely have broad substrate specificity, and thus, there might be a metabolic grid from a precursor to phomopsin A. The enzyme(s) responsible for the biosynthesis of 3,4-dehydrovaline (dVal) have also not been identified yet. Finally, phomM' acts as an S-adenosylmethionine-dependent alpha-N-methyltransferase that catalyzes two successive N-methylation reactions, converting N-desmethyl-phomopsin A to phomopsin A and phomopsin A further to an N,N-dimethylated congener called phomopsin E. The protein is UstYa family oxidase phomYd' of Diaporthe leptostromiformis (Lupinosis disease fungus).